The chain runs to 28 residues: Aspartate aminotransferase, mitochondrial (28 aa).

This sequence belongs to the class-I pyridoxal-phosphate-dependent aminotransferase family. Homodimer. The cofactor is pyridoxal 5'-phosphate.

The protein resides in the mitochondrion matrix. It catalyses the reaction L-aspartate + 2-oxoglutarate = oxaloacetate + L-glutamate. Functionally, plays a key role in amino acid metabolism. Important for metabolite exchange between mitochondria and cytosol. The sequence is that of Aspartate aminotransferase, mitochondrial from Catharanthus roseus (Madagascar periwinkle).